Here is a 94-residue protein sequence, read N- to C-terminus: HssA/B-like protein 49 (94 aa).

A disordered region spans residues 1–20 (MTLFSSISSISNPMTSSKSS).

The protein belongs to the hssA/B family.

This chain is HssA/B-like protein 49 (hssl49), found in Dictyostelium discoideum (Social amoeba).